Here is a 361-residue protein sequence, read N- to C-terminus: Mannose-1-phosphate guanyltransferase (361 aa).

Thr153 bears the Phosphothreonine mark. Lys244 participates in a covalent cross-link: Glycyl lysine isopeptide (Lys-Gly) (interchain with G-Cter in ubiquitin).

Belongs to the transferase hexapeptide repeat family.

It localises to the cytoplasm. The catalysed reaction is alpha-D-mannose 1-phosphate + GTP + H(+) = GDP-alpha-D-mannose + diphosphate. It functions in the pathway nucleotide-sugar biosynthesis; GDP-alpha-D-mannose biosynthesis; GDP-alpha-D-mannose from alpha-D-mannose 1-phosphate (GTP route): step 1/1. Involved in cell wall synthesis where it is required for glycosylation. Involved in cell cycle progression through cell-size checkpoint. This Saccharomyces cerevisiae (strain ATCC 204508 / S288c) (Baker's yeast) protein is Mannose-1-phosphate guanyltransferase (PSA1).